Here is a 168-residue protein sequence, read N- to C-terminus: Small ribosomal subunit protein uS5c (168 aa).

Positions 17–80 (WSERVIQITR…SDCKKQIIEF (64 aa)) constitute an S5 DRBM domain.

Belongs to the universal ribosomal protein uS5 family. In terms of assembly, part of the 30S ribosomal subunit. Contacts protein S4.

The protein resides in the plastid. Its subcellular location is the chloroplast. With S4 and S12 plays an important role in translational accuracy. The polypeptide is Small ribosomal subunit protein uS5c (rps5) (Cyanidium caldarium (Red alga)).